The chain runs to 140 residues: FLYWCH family member 2 (140 aa).

Disordered regions lie at residues 1 to 39 and 84 to 140; these read MPLPEPSEQEGESVKASQEPSPKPGTEVIPAAPRKPRKF and HPEA…GKSL. Serine 21 is modified (phosphoserine). Residues 98–114 show a composition bias toward basic and acidic residues; it reads PEQKRSRQDPGTDRTED. Low complexity predominate over residues 118–127; sequence AAGPPEAAGE.

The polypeptide is FLYWCH family member 2 (FLYWCH2) (Homo sapiens (Human)).